A 387-amino-acid polypeptide reads, in one-letter code: 1-deoxy-D-xylulose 5-phosphate reductoisomerase (387 aa).

5 residues coordinate NADPH: Thr10, Gly11, Ile13, Asn38, and Asn122. Lys123 is a 1-deoxy-D-xylulose 5-phosphate binding site. Glu124 lines the NADPH pocket. Asp148 contacts Mn(2+). The 1-deoxy-D-xylulose 5-phosphate site is built by Ser149, Glu150, Ser174, and His197. Glu150 is a binding site for Mn(2+). Residue Gly203 coordinates NADPH. The 1-deoxy-D-xylulose 5-phosphate site is built by Ser210, Asn215, Lys216, and Glu219. Glu219 lines the Mn(2+) pocket.

Belongs to the DXR family. It depends on Mg(2+) as a cofactor. The cofactor is Mn(2+).

The catalysed reaction is 2-C-methyl-D-erythritol 4-phosphate + NADP(+) = 1-deoxy-D-xylulose 5-phosphate + NADPH + H(+). The protein operates within isoprenoid biosynthesis; isopentenyl diphosphate biosynthesis via DXP pathway; isopentenyl diphosphate from 1-deoxy-D-xylulose 5-phosphate: step 1/6. Catalyzes the NADPH-dependent rearrangement and reduction of 1-deoxy-D-xylulose-5-phosphate (DXP) to 2-C-methyl-D-erythritol 4-phosphate (MEP). The polypeptide is 1-deoxy-D-xylulose 5-phosphate reductoisomerase (Ehrlichia canis (strain Jake)).